The primary structure comprises 507 residues: ATP synthase subunit alpha, chloroplastic (507 aa).

170-177 (GDRQTGKT) contributes to the ATP binding site.

Belongs to the ATPase alpha/beta chains family. F-type ATPases have 2 components, CF(1) - the catalytic core - and CF(0) - the membrane proton channel. CF(1) has five subunits: alpha(3), beta(3), gamma(1), delta(1), epsilon(1). CF(0) has four main subunits: a, b, b' and c.

It localises to the plastid. It is found in the chloroplast thylakoid membrane. The enzyme catalyses ATP + H2O + 4 H(+)(in) = ADP + phosphate + 5 H(+)(out). Produces ATP from ADP in the presence of a proton gradient across the membrane. The alpha chain is a regulatory subunit. The polypeptide is ATP synthase subunit alpha, chloroplastic (Nandina domestica (Heavenly bamboo)).